Consider the following 334-residue polypeptide: Phosphate acyltransferase (334 aa).

It belongs to the PlsX family. Homodimer. Probably interacts with PlsY.

The protein localises to the cytoplasm. It carries out the reaction a fatty acyl-[ACP] + phosphate = an acyl phosphate + holo-[ACP]. It functions in the pathway lipid metabolism; phospholipid metabolism. Catalyzes the reversible formation of acyl-phosphate (acyl-PO(4)) from acyl-[acyl-carrier-protein] (acyl-ACP). This enzyme utilizes acyl-ACP as fatty acyl donor, but not acyl-CoA. The sequence is that of Phosphate acyltransferase from Clostridium kluyveri (strain NBRC 12016).